We begin with the raw amino-acid sequence, 282 residues long: 3-methyl-2-oxobutanoate hydroxymethyltransferase (282 aa).

Asp-46 and Asp-85 together coordinate Mg(2+). 3-methyl-2-oxobutanoate contacts are provided by residues 46-47, Asp-85, and Lys-115; that span reads DS. A Mg(2+)-binding site is contributed by Glu-117. The active-site Proton acceptor is Glu-184.

The protein belongs to the PanB family. As to quaternary structure, homodecamer; pentamer of dimers. Requires Mg(2+) as cofactor.

It is found in the cytoplasm. The catalysed reaction is 3-methyl-2-oxobutanoate + (6R)-5,10-methylene-5,6,7,8-tetrahydrofolate + H2O = 2-dehydropantoate + (6S)-5,6,7,8-tetrahydrofolate. The protein operates within cofactor biosynthesis; (R)-pantothenate biosynthesis; (R)-pantoate from 3-methyl-2-oxobutanoate: step 1/2. Functionally, catalyzes the reversible reaction in which hydroxymethyl group from 5,10-methylenetetrahydrofolate is transferred onto alpha-ketoisovalerate to form ketopantoate. This Alkaliphilus metalliredigens (strain QYMF) protein is 3-methyl-2-oxobutanoate hydroxymethyltransferase.